Consider the following 381-residue polypeptide: Protein-glutamate methylesterase/protein-glutamine glutaminase (381 aa).

The Response regulatory domain occupies 8-125 (QVLCIDDSAL…RDGMNEYADQ (118 aa)). Residue aspartate 59 is modified to 4-aspartylphosphate. In terms of domain architecture, CheB-type methylesterase spans 183-375 (FSSTEKLIIV…PHVLARLSAH (193 aa)). Catalysis depends on residues serine 195, histidine 221, and aspartate 317.

The protein belongs to the CheB family. Post-translationally, phosphorylated by CheA. Phosphorylation of the N-terminal regulatory domain activates the methylesterase activity.

It localises to the cytoplasm. It catalyses the reaction [protein]-L-glutamate 5-O-methyl ester + H2O = L-glutamyl-[protein] + methanol + H(+). It carries out the reaction L-glutaminyl-[protein] + H2O = L-glutamyl-[protein] + NH4(+). Its function is as follows. Involved in chemotaxis. Part of a chemotaxis signal transduction system that modulates chemotaxis in response to various stimuli. Catalyzes the demethylation of specific methylglutamate residues introduced into the chemoreceptors (methyl-accepting chemotaxis proteins or MCP) by CheR. Also mediates the irreversible deamidation of specific glutamine residues to glutamic acid. In Ralstonia nicotianae (strain ATCC BAA-1114 / GMI1000) (Ralstonia solanacearum), this protein is Protein-glutamate methylesterase/protein-glutamine glutaminase.